We begin with the raw amino-acid sequence, 58 residues long: uncharacterized protein (58 aa).

This is an uncharacterized protein from Bacillus subtilis (strain 168).